The primary structure comprises 1880 residues: Nonribosomal peptide synthetase otaB (1880 aa).

Residues 205-594 form an adenylation 1 region; sequence AQAVERGNSI…SVSFVGRRQA (390 aa). The 77-residue stretch at 728-804 folds into the Carrier domain; the sequence is LPLSPLERQI…ELGAHLEQEA (77 aa). S765 carries the post-translational modification O-(pantetheine 4'-phosphoryl)serine. The segment at 840-1250 is condensation; that stretch reads EDVYPCTALQ…LLSPQDQQQL (411 aa). The segment at 1269-1665 is adenylation 2; the sequence is QRQCLAHPQK…GRKDRQVKLR (397 aa).

This sequence belongs to the NRP synthetase family.

It carries out the reaction 7-carboxymellein + L-phenylalanine + ATP = ochratoxin B + ADP + phosphate + H(+). It functions in the pathway mycotoxin biosynthesis. Nonribosomal peptide synthetase; part of the gene cluster that mediates the biosynthesis of ochratoxin A (OTA), a mycotoxin composed of a chlorinated type I polyketide dihydroisocoumarin moiety linked to L-phenylalanine, and demonstrated to have nephrotoxic, immunotoxic, genotoxic, neurotoxic, and teratogenic properties. OtaB is responsible for the linking of phenylalanine to the dihydroisocoumarin ring. The pathway begins with the highly reducing polyketide synthase otaA that catalyzes the formation of the isocoumarin group during the initial stages of biosynthesis, starting from one acetate and 4 malonate units, to originate the characteristic pentaketide skeleton 7-methylmellein (7-MM) of the OTA molecule. The newly identified cyclase otaY might be involved in the polyketide cyclization reaction during the initial steps of the OTA biosynthesis. 7-MM is then oxidized into 7-carboxymellein (also called ochratoxin beta) by the cytochrome P450 monooxygenase otaC. The NRPS encoded by the otaB gene is involved in the linking of phenylalanine to the dihydroisocoumarin ring. The reaction catalyzed by NRPS results in the production of ochratoxin B (OTB), which is the non-chlorinated analog of OTA and which subsequently serves as the substrate of the halogenase otaD for chlorination activity to form the final molecular structure of OTA, containing a chlorine atom in the C-5 position of the molecule. The protein is Nonribosomal peptide synthetase otaB of Aspergillus niger (strain ATCC MYA-4892 / CBS 513.88 / FGSC A1513).